The sequence spans 617 residues: MSGKAQQQSRLKELIARGREQGYLTYAEVNDHLPEDISDPEQVEDIIRMINDMGINVFETAPDADALLLAEADTDEAAAEEAAAALAAVESDIGRTTDPVRMYMREMGTVELLTREGEIEIAKRIEEGIREVMSAIAQFPGTVDSILADYNRIVAEGGRLSDVLSGYIDPDDGSLPAEEVEPVNLKDDSADSKEKDDEEEESDDSSDSDDEGDGGPDPEEARLRFTAVSEQLDKAKKALKKHGRGSKQATAELTGLAELFMPIKLVPKQFDALVARVRSALEGVRAQERAIMQLCVRDARMPRADFLRLFPNHETDEKWVDSVLKSKPKYAEAIERLRDDILRNQQKLAALESEVELTVAEIKEINRAMSIGEAKARRAKKEMVEANLRLVISIAKKYTNRGLQFLDLIQEGNIGLMKAVDKFEYRRGYKFSTYATWWIRQAITRSIADQARTIRIPVHMIETINKLNRISRQMLQEMGREPTPEELGERMDMPEDKIRKVLKIAKEPISMETPIGDDEDSHLGDFIEDSTMQSPIEMATSESLKESTREVLAGLTAREAKVLRMRFGIDMNTDHTLEEVGKQFDVTRERIRQIEAKALRKLRHPSRSEHLRSFLDE.

Positions 170-220 are disordered; the sequence is PDDGSLPAEEVEPVNLKDDSADSKEKDDEEEESDDSSDSDDEGDGGPDPEE. Basic and acidic residues predominate over residues 184-195; it reads NLKDDSADSKEK. Residues 196 to 218 show a composition bias toward acidic residues; it reads DDEEEESDDSSDSDDEGDGGPDP. A sigma-70 factor domain-2 region spans residues 383 to 453; the sequence is MVEANLRLVI…TRSIADQART (71 aa). The Interaction with polymerase core subunit RpoC signature appears at 407–410; sequence DLIQ. Residues 462–538 are sigma-70 factor domain-3; the sequence is ETINKLNRIS…DSTMQSPIEM (77 aa). The sigma-70 factor domain-4 stretch occupies residues 551–604; that stretch reads VLAGLTAREAKVLRMRFGIDMNTDHTLEEVGKQFDVTRERIRQIEAKALRKLRH. A DNA-binding region (H-T-H motif) is located at residues 577–596; the sequence is LEEVGKQFDVTRERIRQIEA.

Belongs to the sigma-70 factor family. RpoD/SigA subfamily. In terms of assembly, interacts transiently with the RNA polymerase catalytic core.

It is found in the cytoplasm. Functionally, sigma factors are initiation factors that promote the attachment of RNA polymerase to specific initiation sites and are then released. This sigma factor is the primary sigma factor during exponential growth. The polypeptide is RNA polymerase sigma factor RpoD (Pseudomonas aeruginosa (strain ATCC 15692 / DSM 22644 / CIP 104116 / JCM 14847 / LMG 12228 / 1C / PRS 101 / PAO1)).